The primary structure comprises 101 residues: A-type ATP synthase subunit K (101 aa).

Transmembrane regions (helical) follow at residues Ala-4–Ala-24, Phe-32–Val-52, and Val-75–Leu-95.

The protein belongs to the V-ATPase proteolipid subunit family. In terms of assembly, has multiple subunits with at least A(3), B(3), C, D, E, F, H, I and proteolipid K(x).

The protein localises to the cell membrane. In terms of biological role, component of the A-type ATP synthase that produces ATP from ADP in the presence of a proton gradient across the membrane. The polypeptide is A-type ATP synthase subunit K (Sulfolobus acidocaldarius (strain ATCC 33909 / DSM 639 / JCM 8929 / NBRC 15157 / NCIMB 11770)).